The chain runs to 143 residues: Hemoglobin subunit alpha (143 aa).

Position 2 is an N-acetylserine (serine 2). The Globin domain occupies 2–143; it reads SLSDTDKAVV…LALALSEKYR (142 aa). Histidine 60 contacts O2. Histidine 89 lines the heme b pocket.

The protein belongs to the globin family. Heterotetramer of two alpha chains and two beta chains. Red blood cells.

In terms of biological role, involved in oxygen transport from gills to the various peripheral tissues. The chain is Hemoglobin subunit alpha (hbaa1) from Danio rerio (Zebrafish).